The primary structure comprises 242 residues: MFHNLLGKNKIFSHHDRYVNDYIINVKDLSFAYAKKKVIDNVSFQVKFGEIITILGPNGGGKTTLIRILVGIYKNYLGIVEYAKNFVIGYLPQNFSVNSLIPMTVEYFLVSSYTKQRKKLNLNSVLKDVNVVKILNRQMSEISHGELQLVLLARCLMLNPDIIILDEPVSCMDINAKDSFYKLINQLILRYNLSVIMTSHDLHFVMANSYRVICINKSIYCEGSPSEIVKNEKFLKMFSSYA.

In terms of domain architecture, ABC transporter spans 24 to 241; that stretch reads INVKDLSFAY…EKFLKMFSSY (218 aa). 56–63 contacts ATP; that stretch reads GPNGGGKT.

Belongs to the ABC transporter superfamily. Zinc importer (TC 3.A.1.15.5) family. The complex is composed of two ATP-binding proteins (ZnuC), two transmembrane proteins (ZnuB) and a solute-binding protein (ZnuA).

Its subcellular location is the cell inner membrane. The enzyme catalyses Zn(2+)(out) + ATP(in) + H2O(in) = Zn(2+)(in) + ADP(in) + phosphate(in) + H(+)(in). Its function is as follows. Part of the ABC transporter complex ZnuABC involved in zinc import. Responsible for energy coupling to the transport system. This is Zinc import ATP-binding protein ZnuC from Ehrlichia ruminantium (strain Gardel).